The following is a 734-amino-acid chain: DNA ligase (734 aa).

NAD(+) is bound by residues aspartate 42–aspartate 46, serine 91–leucine 92, and glutamate 125. Residue lysine 127 is the N6-AMP-lysine intermediate of the active site. NAD(+)-binding residues include arginine 148, glutamate 185, lysine 301, and lysine 325. Residues cysteine 430, cysteine 433, cysteine 454, and cysteine 460 each contribute to the Zn(2+) site. Residues serine 655–alanine 734 enclose the BRCT domain.

Belongs to the NAD-dependent DNA ligase family. LigA subfamily. Mg(2+) serves as cofactor. Mn(2+) is required as a cofactor.

It catalyses the reaction NAD(+) + (deoxyribonucleotide)n-3'-hydroxyl + 5'-phospho-(deoxyribonucleotide)m = (deoxyribonucleotide)n+m + AMP + beta-nicotinamide D-nucleotide.. Its function is as follows. DNA ligase that catalyzes the formation of phosphodiester linkages between 5'-phosphoryl and 3'-hydroxyl groups in double-stranded DNA using NAD as a coenzyme and as the energy source for the reaction. It is essential for DNA replication and repair of damaged DNA. The protein is DNA ligase of Mesorhizobium japonicum (strain LMG 29417 / CECT 9101 / MAFF 303099) (Mesorhizobium loti (strain MAFF 303099)).